Reading from the N-terminus, the 204-residue chain is Somatotropin (204 aa).

Residues 1–17 form the signal peptide; that stretch reads MNSVVLLLSVVCLGVSS. At Gln-18 the chain carries Pyrrolidone carboxylic acid. His-36 lines the Zn(2+) pocket. Cys-69 and Cys-177 form a disulfide bridge. Glu-186 contacts Zn(2+). Cysteines 194 and 202 form a disulfide.

The protein belongs to the somatotropin/prolactin family.

It localises to the secreted. Growth hormone plays an important role in growth control and involved in the regulation of several anabolic processes. This Oreochromis niloticus (Nile tilapia) protein is Somatotropin (gh).